We begin with the raw amino-acid sequence, 427 residues long: uncharacterized protein (427 aa).

This sequence belongs to the CAF1 family.

This is an uncharacterized protein from Schizosaccharomyces pombe (strain 972 / ATCC 24843) (Fission yeast).